A 92-amino-acid polypeptide reads, in one-letter code: Probable Fe(2+)-trafficking protein (92 aa).

It belongs to the Fe(2+)-trafficking protein family.

Functionally, could be a mediator in iron transactions between iron acquisition and iron-requiring processes, such as synthesis and/or repair of Fe-S clusters in biosynthetic enzymes. The chain is Probable Fe(2+)-trafficking protein from Shewanella loihica (strain ATCC BAA-1088 / PV-4).